The primary structure comprises 1119 residues: DNA-directed RNA polymerase subunit beta (1119 aa).

The protein belongs to the RNA polymerase beta chain family. In terms of assembly, the RNAP catalytic core consists of 2 alpha, 1 beta, 1 beta' and 1 omega subunit. When a sigma factor is associated with the core the holoenzyme is formed, which can initiate transcription.

The enzyme catalyses RNA(n) + a ribonucleoside 5'-triphosphate = RNA(n+1) + diphosphate. DNA-dependent RNA polymerase catalyzes the transcription of DNA into RNA using the four ribonucleoside triphosphates as substrates. The chain is DNA-directed RNA polymerase subunit beta from Thermus thermophilus (strain ATCC BAA-163 / DSM 7039 / HB27).